We begin with the raw amino-acid sequence, 156 residues long: Cell division protein SepF (156 aa).

Positions 23–36 (SYEKEQTDMKKQQD) are enriched in basic and acidic residues. The segment at 23–48 (SYEKEQTDMKKQQDPPEQQDVTFPKA) is disordered. The segment covering 37–48 (PPEQQDVTFPKA) has biased composition (polar residues).

Belongs to the SepF family. Homodimer. Interacts with FtsZ.

Its subcellular location is the cytoplasm. Cell division protein that is part of the divisome complex and is recruited early to the Z-ring. Probably stimulates Z-ring formation, perhaps through the cross-linking of FtsZ protofilaments. Its function overlaps with FtsA. This chain is Cell division protein SepF, found in Bacillus cereus (strain ATCC 10987 / NRS 248).